The primary structure comprises 319 residues: Ferrochelatase (319 aa).

Fe cation contacts are provided by His193 and Glu274.

Belongs to the ferrochelatase family.

Its subcellular location is the cytoplasm. It catalyses the reaction heme b + 2 H(+) = protoporphyrin IX + Fe(2+). It functions in the pathway porphyrin-containing compound metabolism; protoheme biosynthesis; protoheme from protoporphyrin-IX: step 1/1. Functionally, catalyzes the ferrous insertion into protoporphyrin IX. The protein is Ferrochelatase of Actinobacillus pleuropneumoniae serotype 7 (strain AP76).